Here is a 209-residue protein sequence, read N- to C-terminus: PRA1 family protein A2 (209 aa).

4 helical membrane passes run 51-72 (LYYY…ALVT), 76-98 (ALVG…AASF), 142-162 (RWVF…SSCG), and 163-183 (LLWV…HASI).

This sequence belongs to the PRA1 family.

The protein resides in the endosome membrane. May be involved in both secretory and endocytic intracellular trafficking in the endosomal/prevacuolar compartments. The sequence is that of PRA1 family protein A2 (PRA1A2) from Arabidopsis thaliana (Mouse-ear cress).